Here is a 1021-residue protein sequence, read N- to C-terminus: Multidrug resistance protein MdtC (1021 aa).

Residues Met1 to Leu6 are Cytoplasmic-facing. The chain crosses the membrane as a helical span at residues Phe7–Phe29. The Periplasmic segment spans residues Arg30 to Glu335. A helical transmembrane segment spans residues Gln336–Leu353. Residues Arg354–Thr359 lie on the Cytoplasmic side of the membrane. Residues Ile360–Leu379 form a helical membrane-spanning segment. The Periplasmic segment spans residues Cys380–Ser388. Residues Leu389–Ala411 form a helical membrane-spanning segment. Residues Arg412 to Glu430 are Cytoplasmic-facing. Residues Val431 to Gly453 traverse the membrane as a helical segment. Over Gly454–Leu467 the chain is Periplasmic. The helical transmembrane segment at Ser468 to Leu490 threads the bilayer. Residues Lys491–Gln848 lie on the Cytoplasmic side of the membrane. Residues Val849–Val871 form a helical membrane-spanning segment. Residues His872–Ala890 are Periplasmic-facing. The helical transmembrane segment at Leu891 to Val913 threads the bilayer. Over Lys914–Cys943 the chain is Cytoplasmic. The chain crosses the membrane as a helical span at residues Leu944–Leu966. The Periplasmic portion of the chain corresponds to Ser967–Ile980. The helical transmembrane segment at Thr981–Phe1003 threads the bilayer. Residues Phe1004 to Glu1021 lie on the Cytoplasmic side of the membrane.

Belongs to the resistance-nodulation-cell division (RND) (TC 2.A.6) family. MdtC subfamily. As to quaternary structure, part of a tripartite efflux system composed of MdtA, MdtB and MdtC. MdtC forms a heteromultimer with MdtB.

It localises to the cell inner membrane. The sequence is that of Multidrug resistance protein MdtC from Shigella flexneri.